The chain runs to 172 residues: Lipoprotein signal peptidase (172 aa).

A run of 3 helical transmembrane segments spans residues 10-30 (LIWL…KAWV), 68-88 (WQLW…AFWL), and 98-118 (SALP…DRLM). Catalysis depends on residues aspartate 124 and aspartate 142. Residues 138-158 (FNIADSAIVGGAIGIAVFGLF) form a helical membrane-spanning segment.

This sequence belongs to the peptidase A8 family.

Its subcellular location is the cell inner membrane. The enzyme catalyses Release of signal peptides from bacterial membrane prolipoproteins. Hydrolyzes -Xaa-Yaa-Zaa-|-(S,diacylglyceryl)Cys-, in which Xaa is hydrophobic (preferably Leu), and Yaa (Ala or Ser) and Zaa (Gly or Ala) have small, neutral side chains.. The protein operates within protein modification; lipoprotein biosynthesis (signal peptide cleavage). This protein specifically catalyzes the removal of signal peptides from prolipoproteins. The protein is Lipoprotein signal peptidase of Xanthomonas euvesicatoria pv. vesicatoria (strain 85-10) (Xanthomonas campestris pv. vesicatoria).